We begin with the raw amino-acid sequence, 449 residues long: Tryptophan--tRNA ligase (449 aa).

ATP is bound by residues 10–12 and 18–19; these read TTT and GN. Positions 11-19 match the 'HIGH' region motif; that stretch reads TTGTPHLGN. Residue Asp143 coordinates L-tryptophan. ATP contacts are provided by residues 155–157, Leu197, and 204–208; these read GRD and KMSKS. Residues 204-208 carry the 'KMSKS' region motif; sequence KMSKS.

The protein belongs to the class-I aminoacyl-tRNA synthetase family. Homodimer.

It localises to the cytoplasm. It catalyses the reaction tRNA(Trp) + L-tryptophan + ATP = L-tryptophyl-tRNA(Trp) + AMP + diphosphate + H(+). Its function is as follows. Catalyzes the attachment of tryptophan to tRNA(Trp). This is Tryptophan--tRNA ligase from Pseudomonas putida (strain ATCC 47054 / DSM 6125 / CFBP 8728 / NCIMB 11950 / KT2440).